The following is a 523-amino-acid chain: 2-isopropylmalate synthase (523 aa).

Positions 5 to 267 (VIIFDTTLRD…HTNINHHEIW (263 aa)) constitute a Pyruvate carboxyltransferase domain. Residues Asp14, His202, His204, and Asn238 each contribute to the Mn(2+) site. The regulatory domain stretch occupies residues 392–523 (RLDYFSVQSG…QNKENNKETV (132 aa)).

It belongs to the alpha-IPM synthase/homocitrate synthase family. LeuA type 1 subfamily. As to quaternary structure, homodimer. It depends on Mn(2+) as a cofactor.

It localises to the cytoplasm. It catalyses the reaction 3-methyl-2-oxobutanoate + acetyl-CoA + H2O = (2S)-2-isopropylmalate + CoA + H(+). Its pathway is amino-acid biosynthesis; L-leucine biosynthesis; L-leucine from 3-methyl-2-oxobutanoate: step 1/4. In terms of biological role, catalyzes the condensation of the acetyl group of acetyl-CoA with 3-methyl-2-oxobutanoate (2-ketoisovalerate) to form 3-carboxy-3-hydroxy-4-methylpentanoate (2-isopropylmalate). The sequence is that of 2-isopropylmalate synthase from Salmonella paratyphi A (strain ATCC 9150 / SARB42).